We begin with the raw amino-acid sequence, 64 residues long: H/ACA ribonucleoprotein complex subunit 3 (64 aa).

Belongs to the NOP10 family. In terms of assembly, component of the box H/ACA small nucleolar ribonucleoprotein (H/ACA snoRNP) complex consisting of Nop60B, Gar1, NPH2 and Nop10, and associated with H/ACA-type snoRNAs.

It localises to the nucleus. Its subcellular location is the nucleolus. Functionally, component of the box H/ACA small nucleolar ribonucleoprotein (H/ACA snoRNP) complex, which catalyzes pseudouridylation of rRNA. This involves the isomerization of uridine such that the ribose is subsequently attached to C5, instead of the normal N1. Pseudouridine ('psi') residues may serve to stabilize the conformation of rRNAs. Required for ribosome biogenesis. H/ACA snoRNP complex-dependent ribosome biogenesis is important in female germline cell differentiation during oogenesis. The chain is H/ACA ribonucleoprotein complex subunit 3 from Drosophila melanogaster (Fruit fly).